Here is a 329-residue protein sequence, read N- to C-terminus: Peroxidase 30 (329 aa).

The N-terminal stretch at 1-27 (MKTMTQLNIAVVVVVTVLIGMLRSSEA) is a signal peptide. 4 cysteine pairs are disulfide-bonded: Cys-38/Cys-116, Cys-71/Cys-76, Cys-122/Cys-324, and Cys-201/Cys-234. His-69 (proton acceptor) is an active-site residue. 5 residues coordinate Ca(2+): Asp-70, Val-73, Gly-75, Asp-77, and Ser-79. Asn-83 and Asn-155 each carry an N-linked (GlcNAc...) asparagine glycan. A disordered region spans residues 141 to 165 (SWSVPTGRRDGRISNKTEATNNIPP). Residues 156–165 (KTEATNNIPP) are compositionally biased toward polar residues. Pro-164 provides a ligand contact to substrate. Asn-169 is a glycosylation site (N-linked (GlcNAc...) asparagine). His-194 lines the heme b pocket. A Ca(2+)-binding site is contributed by Thr-195. Asn-210 and Asn-240 each carry an N-linked (GlcNAc...) asparagine glycan. Residues Asp-247, Ser-250, and Asp-255 each coordinate Ca(2+). Asn-290 carries N-linked (GlcNAc...) asparagine glycosylation.

It belongs to the peroxidase family. Classical plant (class III) peroxidase subfamily. Requires heme b as cofactor. It depends on Ca(2+) as a cofactor. As to expression, mainly expressed in roots.

It localises to the secreted. The enzyme catalyses 2 a phenolic donor + H2O2 = 2 a phenolic radical donor + 2 H2O. Functionally, removal of H(2)O(2), oxidation of toxic reductants, biosynthesis and degradation of lignin, suberization, auxin catabolism, response to environmental stresses such as wounding, pathogen attack and oxidative stress. These functions might be dependent on each isozyme/isoform in each plant tissue. This is Peroxidase 30 (PER30) from Arabidopsis thaliana (Mouse-ear cress).